A 1997-amino-acid chain; its full sequence is Receptor-type tyrosine-protein phosphatase beta (1997 aa).

An N-terminal signal peptide occupies residues 1–22 (MLSHGAGLALWITLSLLQTGLA). Fibronectin type-III domains are found at residues 23-111 (EPER…TDPL), 112-207 (PPAR…SPVK), 203-288 (PSPV…VRTA), 291-378 (EVSN…TFPD), 379-471 (KVAN…LAVL), 467-552 (PLAV…KGRT), 556-641 (QVTD…EGRT), 642-729 (VPSS…QERT), 730-829 (VPDK…TLRN), 819-906 (PEPV…GFTV), 909-1001 (AVKN…VQGV), 995-1083 (PASV…EGRT), 1087-1175 (AVTD…VPAS), 1173-1260 (PASV…SRTA), 1260-1356 (APSP…TKPD), 1357-1448 (KIQN…IDRP), and 1458-1554 (NEKD…EMES). At 23–1621 (EPERCNFTLA…ESEPLFGAIE (1599 aa)) the chain is on the extracellular side. N-linked (GlcNAc...) asparagine glycans are attached at residues asparagine 28, asparagine 53, asparagine 75, asparagine 172, asparagine 198, asparagine 267, asparagine 321, asparagine 414, asparagine 421, asparagine 479, asparagine 544, asparagine 574, asparagine 598, asparagine 652, asparagine 721, and asparagine 829. N-linked (GlcNAc...) asparagine glycans are attached at residues asparagine 1040, asparagine 1096, asparagine 1163, asparagine 1185, asparagine 1212, asparagine 1274, asparagine 1367, asparagine 1470, asparagine 1474, and asparagine 1518. A helical transmembrane segment spans residues 1622–1642 (GVSAGLFLIGMLVAVVALLIC). Residues 1643–1997 (RQKVSHGRER…YHRDPVYSRH (355 aa)) lie on the Cytoplasmic side of the membrane. Positions 1703–1963 (LSKEYEELKD…VYLHQCVRDV (261 aa)) constitute a Tyrosine-protein phosphatase domain. Residues aspartate 1870, 1904–1910 (CSAGVGR), and glutamine 1948 contribute to the substrate site. Cysteine 1904 serves as the catalytic Phosphocysteine intermediate. Residue tyrosine 1981 is modified to Phosphotyrosine.

This sequence belongs to the protein-tyrosine phosphatase family. Receptor class 3 subfamily. In terms of assembly, monomer. Interacts with TEK. Interacts via fibronectin type-III 17 domain with CDH5. Detected in a complex with CNTN1 and NRCAM. Interacts (phosphorylated form) with FYN and GRB2. Interacts with IGFBP2.

It localises to the membrane. The enzyme catalyses O-phospho-L-tyrosyl-[protein] + H2O = L-tyrosyl-[protein] + phosphate. Its function is as follows. Plays an important role in blood vessel remodeling and angiogenesis. Not necessary for the initial formation of blood vessels, but is essential for their maintenance and remodeling. Can induce dephosphorylation of TEK/TIE2, CDH5/VE-cadherin and KDR/VEGFR-2. Regulates angiopoietin-TIE2 signaling in endothelial cells. Acts as a negative regulator of TIE2, and controls TIE2 driven endothelial cell proliferation, which in turn affects blood vessel remodeling during embryonic development and determines blood vessel size during perinatal growth. Essential for the maintenance of endothelial cell contact integrity and for the adhesive function of VE-cadherin in endothelial cells and this requires the presence of plakoglobin. The protein is Receptor-type tyrosine-protein phosphatase beta (PTPRB) of Homo sapiens (Human).